Consider the following 204-residue polypeptide: dITP/XTP pyrophosphatase (204 aa).

7 to 12 (TNNKDK) provides a ligand contact to substrate. The Mg(2+) site is built by D38 and D74. The active-site Proton acceptor is D74. Substrate-binding positions include S75, 156-159 (FGYD), K179, and 184-185 (HR).

The protein belongs to the HAM1 NTPase family. In terms of assembly, homodimer. It depends on Mg(2+) as a cofactor.

It carries out the reaction XTP + H2O = XMP + diphosphate + H(+). The enzyme catalyses dITP + H2O = dIMP + diphosphate + H(+). It catalyses the reaction ITP + H2O = IMP + diphosphate + H(+). Functionally, pyrophosphatase that catalyzes the hydrolysis of nucleoside triphosphates to their monophosphate derivatives, with a high preference for the non-canonical purine nucleotides XTP (xanthosine triphosphate), dITP (deoxyinosine triphosphate) and ITP. Seems to function as a house-cleaning enzyme that removes non-canonical purine nucleotides from the nucleotide pool, thus preventing their incorporation into DNA/RNA and avoiding chromosomal lesions. This chain is dITP/XTP pyrophosphatase, found in Campylobacter fetus subsp. fetus (strain 82-40).